The sequence spans 163 residues: R-phycoerythrin alpha chain (163 aa).

(2R,3E)-phycoerythrobilin is bound by residues Cys82 and Cys139.

The protein belongs to the phycobiliprotein family. As to quaternary structure, heterodimer of an alpha and a beta chain. Contains two covalently linked bilin chromophores.

It is found in the plastid. Its subcellular location is the chloroplast thylakoid membrane. Light-harvesting photosynthetic bile pigment-protein from the phycobiliprotein complex. The polypeptide is R-phycoerythrin alpha chain (cpeA) (Aglaothamnion neglectum (Red alga)).